The sequence spans 160 residues: uncharacterized protein (160 aa).

This is an uncharacterized protein from Gracula (BFDV).